The following is a 468-amino-acid chain: MIMRTSWVASRKGQSNVSQMYFARREVITEEMSFVAKKENLPESLIMEEVARGRMIIPANINHLNLEPMAIGIASSCKVNANIGASPNASDVNEELKKLHLAVKYGADTVMDLSTGGVNLDEVRTAIIQASPVPIGTVPVYQALESVHGSIEKLSEEDFLHIIEKHCQQGVDYQTIHAGLLIEHLPKVKGRLTGIVSRGGGILAQWMLYHHKQNPLFTRFDDICEIFKRYDCSFSLGDSLRPGCLHDASDEAQLAELKTLGELTQRAWKHDVQVMVEGPGHVPMDQIEFNVRKQMEDCLEAPFYVLGPLVTDIAPGYDHITSAIGAAMAGWYGTAMLCYVTPKEHLGLPNPEDVREGLIAYKIAAHAADIARHRSGARDRDDELSRARYAFDWNKQFELSLDPERAREYHDETLPADIYKQAEFCSMCGPKHCPMQTKITDKDLENLESILSSKGAKEINTMKLDKEV.

Residues asparagine 82, methionine 111, tyrosine 141, histidine 177, 197–199 (SRG), 238–241 (DSLR), and glutamate 277 contribute to the substrate site. A Zn(2+)-binding site is contributed by histidine 281. Tyrosine 304 is a substrate binding site. Histidine 345 serves as a coordination point for Zn(2+). [4Fe-4S] cluster contacts are provided by cysteine 425, cysteine 428, and cysteine 433.

It belongs to the ThiC family. It depends on [4Fe-4S] cluster as a cofactor.

It catalyses the reaction 5-amino-1-(5-phospho-beta-D-ribosyl)imidazole + S-adenosyl-L-methionine = 4-amino-2-methyl-5-(phosphooxymethyl)pyrimidine + CO + 5'-deoxyadenosine + formate + L-methionine + 3 H(+). It participates in cofactor biosynthesis; thiamine diphosphate biosynthesis. Catalyzes the synthesis of the hydroxymethylpyrimidine phosphate (HMP-P) moiety of thiamine from aminoimidazole ribotide (AIR) in a radical S-adenosyl-L-methionine (SAM)-dependent reaction. The protein is Phosphomethylpyrimidine synthase of Prochlorococcus marinus (strain SARG / CCMP1375 / SS120).